The following is a 487-amino-acid chain: DNA-dependent metalloprotease SPRTN (487 aa).

Position 1 is an N-acetylmethionine (Met-1). A SprT-like domain is found at 45 to 212; sequence LQGLFVLFND…KTCGGTYIKI (168 aa). Zn(2+) is bound at residue His-111. Glu-112 is a catalytic residue. Residues His-115 and His-130 each coordinate Zn(2+). The segment at 219-248 is disordered; it reads SKKGKGKTKLRKQPVSEAENKDKPNRGEKQ. Positions 220–230 are enriched in basic residues; that stretch reads KKGKGKTKLRK. An N6-acetyllysine modification is found at Lys-230. Residues 236–247 are compositionally biased toward basic and acidic residues; sequence AENKDKPNRGEK. The short motif at 253–261 is the SHP-box element; the sequence is FTGKGYVLG. At Ser-267 the chain carries Phosphoserine. The span at 280–289 shows a compositional bias: polar residues; sequence SQEPLSQDHS. A disordered region spans residues 280 to 317; that stretch reads SQEPLSQDHSANALRPHSKTEVKFEQNGPSKKTSVASP. Residue Lys-302 forms a Glycyl lysine isopeptide (Lys-Gly) (interchain with G-Cter in SUMO2) linkage. Polar residues predominate over residues 306–317; that stretch reads NGPSKKTSVASP. The short motif at 324-331 is the PIP-box element; it reads QNVLSNYF. Residue Lys-340 forms a Glycyl lysine isopeptide (Lys-Gly) (interchain with G-Cter in SUMO2); alternate linkage. Lys-340 participates in a covalent cross-link: Glycyl lysine isopeptide (Lys-Gly) (interchain with G-Cter in ubiquitin); alternate. A disordered region spans residues 347-379; it reads GSPVKSLTVGDSTTKSVSAGSQRRVTSSRTSLR. At Ser-373 the chain carries Phosphoserine. The Nuclear localization signal motif lies at 401 to 412; it reads GKLPSKRPRIED. A Glycyl lysine isopeptide (Lys-Gly) (interchain with G-Cter in ubiquitin) cross-link involves residue Lys-413. Residues Lys-422 and Lys-423 each participate in a glycyl lysine isopeptide (Lys-Gly) (interchain with G-Cter in SUMO2) cross-link. The segment at 427–455 is disordered; that stretch reads QSGGGDVTSSSHPPAAAQSPSGASGQSRV. Residues 435 to 453 are compositionally biased toward low complexity; it reads SSSHPPAAAQSPSGASGQS. A UBZ4-type zinc finger spans residues 455-482; the sequence is VVHCPVCQDEVSETQINEHLDWCLERDS. Residues Cys-458, Cys-461, His-473, and Cys-477 each contribute to the Zn(2+) site. Lys-486 participates in a covalent cross-link: Glycyl lysine isopeptide (Lys-Gly) (interchain with G-Cter in SUMO2).

The protein belongs to the Spartan family. Homodimer. Interacts (VIA PIP-box) with PCNA (when ubiquitinated). Interacts (via its SHP-box) with VCP/p97. Interacts with RAD18. Interacts with KCTD13 and POLD3. It depends on Zn(2+) as a cofactor. Post-translationally, autocatalytically cleaved in response to double-stranded DNA-binding: autocatalytic cleavage takes place in trans and leads to inactivation. In terms of processing, monoubiquitinated; monoubiquitination promotes exclusion from chromatin. Deubiquitinated by VCPIP1: deubiquitination is required for subsequent acetylation and recruitment to chromatin and DNA damage sites. Acetylated following deubiquitination by VCPIP1, leading to recruitment to chromatin and DNA damage sites. Post-translationally, phosphorylation by CHEK1 promotes recruitment to chromatin.

The protein resides in the nucleus. It is found in the chromosome. With respect to regulation, DNA-binding activates the protease activity: single-stranded DNA-binding specifically activates ability to cleave covalent DNA-protein cross-links (DPCs). In contrast, double-stranded DNA-binding specifically activates autocatalytic cleavage, and subsequent inactivation. Functionally, DNA-dependent metalloendopeptidase that mediates the proteolytic cleavage of covalent DNA-protein cross-links (DPCs) during DNA synthesis, thereby playing a key role in maintaining genomic integrity. DPCs are highly toxic DNA lesions that interfere with essential chromatin transactions, such as replication and transcription, and which are induced by reactive agents, such as UV light or formaldehyde. Associates with the DNA replication machinery and specifically removes DPCs during DNA synthesis. Catalyzes proteolytic cleavage of the HMCES DNA-protein cross-link following unfolding by the BRIP1/FANCJ helicase. Acts as a pleiotropic protease for DNA-binding proteins cross-linked with DNA, such as TOP1, TOP2A, histones H3 and H4. Mediates degradation of DPCs that are not ubiquitinated, while it is not able to degrade ubiquitinated DPCs. SPRTN activation requires polymerase collision with DPCs followed by helicase bypass of DPCs. Involved in recruitment of VCP/p97 to sites of DNA damage. Also acts as an activator of CHEK1 during normal DNA replication by mediating proteolytic cleavage of CHEK1, thereby promoting CHEK1 removal from chromatin and subsequent activation. Does not activate CHEK1 in response to DNA damage. May also act as a 'reader' of ubiquitinated PCNA: recruited to sites of UV damage and interacts with ubiquitinated PCNA and RAD18, the E3 ubiquitin ligase that monoubiquitinates PCNA. Facilitates chromatin association of RAD18 and is required for efficient PCNA monoubiquitination, promoting a feed-forward loop to enhance PCNA ubiquitination and translesion DNA synthesis. The sequence is that of DNA-dependent metalloprotease SPRTN from Bos taurus (Bovine).